A 208-amino-acid polypeptide reads, in one-letter code: Putative RING finger protein 413R (208 aa).

Positions 1–87 (MDAIFYPLPI…RHWSDDDSDR (87 aa)) are disordered. Over residues 22-71 (DFQEEDFQEEDFQEEDFQEEDFQEEDEDEEDEEVNEYPSDLDDEYPDSDY) the composition is skewed to acidic residues. Positions 72–82 (YDERSDRHWSD) are enriched in basic and acidic residues. A coiled-coil region spans residues 83-147 (DDSDRDLDDL…KLTTLSKNLT (65 aa)). An RING-type zinc finger spans residues 148 to 196 (CIICLTNQVQILTIPCGHLIMCNPCSLNLNNSVCTRGVNSNYEKCPKCR).

The chain is Putative RING finger protein 413R (EF2) from Acheta domesticus (House cricket).